The following is a 61-amino-acid chain: Large ribosomal subunit protein uL30 (61 aa).

The protein belongs to the universal ribosomal protein uL30 family. As to quaternary structure, part of the 50S ribosomal subunit.

This Acidithiobacillus ferrooxidans (strain ATCC 23270 / DSM 14882 / CIP 104768 / NCIMB 8455) (Ferrobacillus ferrooxidans (strain ATCC 23270)) protein is Large ribosomal subunit protein uL30.